Consider the following 241-residue polypeptide: uncharacterized protein (241 aa).

This is an uncharacterized protein from Pasteurella multocida (strain Pm70).